A 293-amino-acid polypeptide reads, in one-letter code: Probable 2-(5''-triphosphoribosyl)-3'-dephosphocoenzyme-A synthase (293 aa).

The protein belongs to the CitG/MdcB family.

It catalyses the reaction 3'-dephospho-CoA + ATP = 2'-(5''-triphospho-alpha-D-ribosyl)-3'-dephospho-CoA + adenine. In terms of biological role, involved in the formation of 2-(5''-phosphoribosyl)-3'-dephosphocoenzyme-A, the prosthetic group of the acyl-carrier protein of the malonate decarboxylase. This is Probable 2-(5''-triphosphoribosyl)-3'-dephosphocoenzyme-A synthase from Pseudomonas aeruginosa (strain ATCC 15692 / DSM 22644 / CIP 104116 / JCM 14847 / LMG 12228 / 1C / PRS 101 / PAO1).